Here is a 582-residue protein sequence, read N- to C-terminus: 5-aminolevulinate synthase, erythroid-specific, mitochondrial (582 aa).

The transit peptide at M1–S44 directs the protein to the mitochondrion. R158 provides a ligand contact to succinyl-CoA. Residues C253 and F254 each contribute to the pyridoxal 5'-phosphate site. Residues S275 and K294 each contribute to the succinyl-CoA site. The pyridoxal 5'-phosphate site is built by S327, H355, and T383. K386 is a catalytic residue. N6-(pyridoxal phosphate)lysine is present on K386. Residues T415 and T416 each contribute to the pyridoxal 5'-phosphate site. T503 provides a ligand contact to succinyl-CoA.

This sequence belongs to the class-II pyridoxal-phosphate-dependent aminotransferase family. As to quaternary structure, homodimer. It depends on pyridoxal 5'-phosphate as a cofactor.

The protein resides in the mitochondrion inner membrane. It catalyses the reaction succinyl-CoA + glycine + H(+) = 5-aminolevulinate + CO2 + CoA. It functions in the pathway porphyrin-containing compound metabolism; protoporphyrin-IX biosynthesis; 5-aminolevulinate from glycine: step 1/1. Its function is as follows. Catalyzes the pyridoxal 5'-phosphate (PLP)-dependent condensation of succinyl-CoA and glycine to form aminolevulinic acid (ALA), with CoA and CO2 as by-products. Contributes significantly to heme formation during erythropoiesis. The polypeptide is 5-aminolevulinate synthase, erythroid-specific, mitochondrial (ALAS2) (Delphinapterus leucas (Beluga whale)).